Here is a 350-residue protein sequence, read N- to C-terminus: MPVLHNRISNDALKAKMLAESEPRTTISFYKYFHIADPKATRDALYQLFTALNVFGRVYLAHEGINAQISVPASNVETFRAQLYAFDPALEGLRLNIALDDDGKSFWVLRMKVRDRIVADGIDDPHFDASNVGEYLQAAEVNAMLDDPDALFIDMRNHYEYEVGHFENALEIPADTFREQLPKAVEMMQAHKDKKIVMYCTGGIRCEKASAWMKHNGFNKVWHIEGGIIEYARKAREQGLPVRFIGKNFVFDERMGERISDEIIAHCHQCGAPCDSHTNCKNDGCHLLFIQCPVCAEKYKGCCSEICCEESALPPEEQRRRRAGRENGNKIFNKSRGRLNTTLCIPDPTE.

The 95-residue stretch at 146 to 240 folds into the Rhodanese domain; the sequence is DDPDALFIDM…YARKAREQGL (95 aa). Cysteine 200 serves as the catalytic Cysteine persulfide intermediate.

The protein belongs to the TrhO family.

It carries out the reaction uridine(34) in tRNA + AH2 + O2 = 5-hydroxyuridine(34) in tRNA + A + H2O. Functionally, catalyzes oxygen-dependent 5-hydroxyuridine (ho5U) modification at position 34 in tRNAs, the first step in 5-carboxymethoxyuridine (cmo5U) biosynthesis. May be part of an alternate pathway, which is able to bypass cmo5U biogenesis in a subset of tRNAs under aerobic conditions. This chain is tRNA uridine(34) hydroxylase, found in Escherichia coli (strain K12).